The primary structure comprises 308 residues: 2-methylisocitrate lyase (308 aa).

A substrate-binding site is contributed by 51-53; it reads SGA. Mg(2+) contacts are provided by aspartate 90 and aspartate 92. Residues 127–128, arginine 160, glutamate 190, 212–214, arginine 243, and arginine 272 each bind substrate; these read CG and NMT.

It belongs to the isocitrate lyase/PEP mutase superfamily. Methylisocitrate lyase family. As to quaternary structure, homotetramer; dimer of dimers. Mg(2+) serves as cofactor.

The catalysed reaction is (2S,3R)-3-hydroxybutane-1,2,3-tricarboxylate = pyruvate + succinate. It functions in the pathway organic acid metabolism; propanoate degradation. In terms of biological role, involved in the catabolism of short chain fatty acids (SCFA) via the 2-methylcitrate cycle I (propionate degradation route). Catalyzes the thermodynamically favored C-C bond cleavage of (2R,3S)-2-methylisocitrate to yield pyruvate and succinate via an alpha-carboxy-carbanion intermediate. In Aeropyrum pernix (strain ATCC 700893 / DSM 11879 / JCM 9820 / NBRC 100138 / K1), this protein is 2-methylisocitrate lyase.